Here is a 156-residue protein sequence, read N- to C-terminus: CASP-like protein 5C1 (156 aa).

Topologically, residues 1-24 are cytoplasmic; sequence MENRERAGAGAVGSAGSLGLRVEQ. A helical membrane pass occupies residues 25–45; it reads AVFSSASLLFMSVGVEFFSYT. A topological domain (extracellular) is located at residue A46. A helical transmembrane segment spans residues 47–67; it reads FCFLVTIMGLVIPWSCTLAMI. The Cytoplasmic segment spans residues 68–81; it reads DVYSILVGCPLRVP. The chain crosses the membrane as a helical span at residues 82-102; the sequence is GVMVIVVIGDWVLAILSLAAA. Residues 103-132 lie on the Extracellular side of the membrane; that stretch reads SSSAAVIDLLLQFHGSHCSPRFCGRYQLSA. The chain crosses the membrane as a helical span at residues 133–153; sequence MMAFLSWFLTAASSLFNLWFI. Over 154–156 the chain is Cytoplasmic; sequence ASR.

This sequence belongs to the Casparian strip membrane proteins (CASP) family. Homodimer and heterodimers.

It is found in the cell membrane. This chain is CASP-like protein 5C1, found in Oryza sativa subsp. indica (Rice).